Consider the following 274-residue polypeptide: Orotidine 5'-phosphate decarboxylase (274 aa).

Lys96 (proton donor) is an active-site residue.

The protein belongs to the OMP decarboxylase family. Type 2 subfamily.

It catalyses the reaction orotidine 5'-phosphate + H(+) = UMP + CO2. Its pathway is pyrimidine metabolism; UMP biosynthesis via de novo pathway; UMP from orotate: step 2/2. The chain is Orotidine 5'-phosphate decarboxylase from Bacteroides fragilis (strain YCH46).